Consider the following 428-residue polypeptide: Peptidase B (428 aa).

Positions 195 and 200 each coordinate Mn(2+). The active site involves lysine 207. Mn(2+) contacts are provided by aspartate 218, aspartate 277, and glutamate 279. Arginine 281 is a catalytic residue.

The protein belongs to the peptidase M17 family. As to quaternary structure, homohexamer. The cofactor is Mn(2+).

It localises to the cytoplasm. The catalysed reaction is Release of an N-terminal amino acid, Xaa, from a peptide or arylamide. Xaa is preferably Glu or Asp but may be other amino acids, including Leu, Met, His, Cys and Gln.. Functionally, probably plays an important role in intracellular peptide degradation. The sequence is that of Peptidase B from Klebsiella pneumoniae subsp. pneumoniae (strain ATCC 700721 / MGH 78578).